Consider the following 448-residue polypeptide: Homogentisate 1,2-dioxygenase (448 aa).

His-303 functions as the Proton acceptor in the catalytic mechanism. Residues His-346 and Glu-352 each coordinate Fe cation. The homogentisate site is built by Tyr-361 and His-382. Fe cation is bound at residue His-382.

Belongs to the homogentisate dioxygenase family. As to quaternary structure, hexamer; dimer of trimers. It depends on Fe cation as a cofactor.

The catalysed reaction is homogentisate + O2 = 4-maleylacetoacetate + H(+). The protein operates within amino-acid degradation; L-phenylalanine degradation; acetoacetate and fumarate from L-phenylalanine: step 4/6. In terms of biological role, involved in the catabolism of homogentisate (2,5-dihydroxyphenylacetate or 2,5-OH-PhAc), a central intermediate in the degradation of phenylalanine and tyrosine. Catalyzes the oxidative ring cleavage of the aromatic ring of homogentisate to yield maleylacetoacetate. This is Homogentisate 1,2-dioxygenase from Nitrobacter hamburgensis (strain DSM 10229 / NCIMB 13809 / X14).